Here is a 258-residue protein sequence, read N- to C-terminus: Ribosomal RNA small subunit methyltransferase A (258 aa).

S-adenosyl-L-methionine contacts are provided by H9, L11, G36, E57, D83, and N102.

The protein belongs to the class I-like SAM-binding methyltransferase superfamily. rRNA adenine N(6)-methyltransferase family. RsmA subfamily.

Its subcellular location is the cytoplasm. It carries out the reaction adenosine(1518)/adenosine(1519) in 16S rRNA + 4 S-adenosyl-L-methionine = N(6)-dimethyladenosine(1518)/N(6)-dimethyladenosine(1519) in 16S rRNA + 4 S-adenosyl-L-homocysteine + 4 H(+). Functionally, specifically dimethylates two adjacent adenosines (A1518 and A1519) in the loop of a conserved hairpin near the 3'-end of 16S rRNA in the 30S particle. May play a critical role in biogenesis of 30S subunits. The chain is Ribosomal RNA small subunit methyltransferase A from Caulobacter vibrioides (strain ATCC 19089 / CIP 103742 / CB 15) (Caulobacter crescentus).